We begin with the raw amino-acid sequence, 152 residues long: Phospholipase A2 GL16-1 (152 aa).

The signal sequence occupies residues 1-21; that stretch reads MNPAHLLVLLAVCVSLLGAST. A propeptide spanning residues 22-27 is cleaved from the precursor; it reads IPPLPL. 7 disulfide bridges follow: cysteine 38–cysteine 104, cysteine 54–cysteine 151, cysteine 56–cysteine 72, cysteine 71–cysteine 132, cysteine 78–cysteine 125, cysteine 88–cysteine 118, and cysteine 111–cysteine 123. Tyrosine 55, glycine 57, and glycine 59 together coordinate Ca(2+). Residue histidine 75 is part of the active site. A Ca(2+)-binding site is contributed by aspartate 76. Aspartate 126 is an active-site residue.

Belongs to the phospholipase A2 family. Group I subfamily. Ca(2+) is required as a cofactor.

The protein localises to the secreted. The catalysed reaction is a 1,2-diacyl-sn-glycero-3-phosphocholine + H2O = a 1-acyl-sn-glycero-3-phosphocholine + a fatty acid + H(+). Its function is as follows. PA2 catalyzes the calcium-dependent hydrolysis of the 2-acyl groups in 3-sn-phosphoglycerides. This chain is Phospholipase A2 GL16-1, found in Laticauda semifasciata (Black-banded sea krait).